The sequence spans 328 residues: Ribosomal RNA large subunit methyltransferase F (328 aa).

The tract at residues 1 to 38 (MTDTPKPPRKKPQRPAKPAAPREKATLHPRNRHQGHYD) is disordered.

Belongs to the methyltransferase superfamily. METTL16/RlmF family.

It is found in the cytoplasm. It carries out the reaction adenosine(1618) in 23S rRNA + S-adenosyl-L-methionine = N(6)-methyladenosine(1618) in 23S rRNA + S-adenosyl-L-homocysteine + H(+). In terms of biological role, specifically methylates the adenine in position 1618 of 23S rRNA. The polypeptide is Ribosomal RNA large subunit methyltransferase F (Pseudomonas syringae pv. tomato (strain ATCC BAA-871 / DC3000)).